A 186-amino-acid chain; its full sequence is Elongation factor P (186 aa).

The protein belongs to the elongation factor P family.

It localises to the cytoplasm. It participates in protein biosynthesis; polypeptide chain elongation. Functionally, involved in peptide bond synthesis. Stimulates efficient translation and peptide-bond synthesis on native or reconstituted 70S ribosomes in vitro. Probably functions indirectly by altering the affinity of the ribosome for aminoacyl-tRNA, thus increasing their reactivity as acceptors for peptidyl transferase. This Neisseria gonorrhoeae (strain NCCP11945) protein is Elongation factor P.